Reading from the N-terminus, the 330-residue chain is Anthranilate phosphoribosyltransferase (330 aa).

Residues G75, 78 to 79 (GD), T83, 85 to 88 (NVST), 103 to 111 (KHGNRAASS), and A115 each bind 5-phospho-alpha-D-ribose 1-diphosphate. G75 lines the anthranilate pocket. Position 87 (S87) interacts with Mg(2+). N106 is a binding site for anthranilate. Position 161 (R161) interacts with anthranilate. Mg(2+) contacts are provided by D220 and E221.

Belongs to the anthranilate phosphoribosyltransferase family. In terms of assembly, homodimer. It depends on Mg(2+) as a cofactor.

It catalyses the reaction N-(5-phospho-beta-D-ribosyl)anthranilate + diphosphate = 5-phospho-alpha-D-ribose 1-diphosphate + anthranilate. Its pathway is amino-acid biosynthesis; L-tryptophan biosynthesis; L-tryptophan from chorismate: step 2/5. Catalyzes the transfer of the phosphoribosyl group of 5-phosphorylribose-1-pyrophosphate (PRPP) to anthranilate to yield N-(5'-phosphoribosyl)-anthranilate (PRA). This Novosphingobium aromaticivorans (strain ATCC 700278 / DSM 12444 / CCUG 56034 / CIP 105152 / NBRC 16084 / F199) protein is Anthranilate phosphoribosyltransferase.